The following is a 469-amino-acid chain: Trigger factor (469 aa).

In terms of domain architecture, PPIase FKBP-type spans 165-250 (GDRVTIDYIG…VKAVCKSDEL (86 aa)). Basic and acidic residues predominate over residues 444-460 (DLTEKKPLKKKTAEKVS). Positions 444–469 (DLTEKKPLKKKTAEKVSTKKKAPKKS) are disordered.

It belongs to the FKBP-type PPIase family. Tig subfamily.

It localises to the cytoplasm. It catalyses the reaction [protein]-peptidylproline (omega=180) = [protein]-peptidylproline (omega=0). In terms of biological role, involved in protein export. Acts as a chaperone by maintaining the newly synthesized protein in an open conformation. Functions as a peptidyl-prolyl cis-trans isomerase. The protein is Trigger factor of Bartonella henselae (strain ATCC 49882 / DSM 28221 / CCUG 30454 / Houston 1) (Rochalimaea henselae).